The sequence spans 894 residues: Disease resistance protein SUMM2 (894 aa).

A coiled-coil region spans residues glutamate 31–glutamine 71. The region spanning threonine 140–serine 443 is the NB-ARC domain. Glycine 183–threonine 190 is a binding site for ATP. LRR repeat units follow at residues serine 517–leucine 538, glutamate 539–cysteine 561, methionine 564–leucine 586, serine 588–lysine 610, lysine 611–serine 633, serine 634–glutamine 656, and histidine 660–proline 681.

Belongs to the disease resistance NB-LRR family. Interacts with PAT1.

With respect to regulation, negatively regulated by the MEKK1-MKK1-MKK2-MPK4 kinase cascade. Functionally, disease resistance protein that mediates defense responses against the bacterial pathogen Pseudomonas syringae pv tomato strain DC3000, and the virulent oomycete Hyaloperonospora arabidopsidis isolate Noco2. Becomes active when the MEKK1-MKK1-MKK2-MPK4 kinase cascade is disrupted by the microbial effector hopAI1. Does not seem to be required for the activation of MPK4 by flg22, or flg22-induced up-regulation of PAD3. Functions downstream of MEKK2/SUMM1 in immune responses, including cell death and defense responses. The sequence is that of Disease resistance protein SUMM2 from Arabidopsis thaliana (Mouse-ear cress).